A 165-amino-acid chain; its full sequence is uncharacterized protein (165 aa).

The tract at residues 68–107 (LEGAPEWAAPHPEEQRRSPPACSQHTPPLPSTPTGPPPCS) is disordered. Pro residues predominate over residues 94-107 (PPLPSTPTGPPPCS).

This is an uncharacterized protein from Homo sapiens (Human).